Here is a 421-residue protein sequence, read N- to C-terminus: D-aspartate ligase (421 aa).

The 203-residue stretch at 130 to 332 folds into the ATP-grasp domain; the sequence is YEVCEEYDLP…LARFVTEDRV (203 aa). ATP is bound at residue 161-224; the sequence is PFEFPVALKP…QDFIPGDDSN (64 aa). Mg(2+) contacts are provided by Asp290, Glu304, and Asn306.

Mg(2+) is required as a cofactor.

It carries out the reaction [beta-GlcNAc-(1-&gt;4)-Mur2Ac(oyl-L-Ala-gamma-D-Glu-L-Lys-D-Ala-D-Ala)](n) + n D-aspartate + n ATP = [beta-GlcNAc-(1-&gt;4)-Mur2Ac(oyl-L-Ala-gamma-D-Glu-6-N-(beta-D-Asp)-L-Lys-D-Ala-D-Ala)]n + n ADP + n phosphate + n H(+). It participates in cell wall biogenesis; peptidoglycan biosynthesis. Its function is as follows. Catalyzes the addition of D-aspartate onto the lysine residue in the peptidoglycan precursor UDP-MurNAc-pentapeptide. The ligation occurs between the beta-carboxylate of D-Asp and the epsilon-amino group of L-Lys. Is highly specific for D-aspartate, as L-aspartate, D-glutamate, D-alanine, D-iso-asparagine and D-malate are not substrates. This Enterococcus faecium (strain Aus0004) protein is D-aspartate ligase.